A 120-amino-acid chain; its full sequence is Large ribosomal subunit protein bL19 (120 aa).

This sequence belongs to the bacterial ribosomal protein bL19 family.

This protein is located at the 30S-50S ribosomal subunit interface and may play a role in the structure and function of the aminoacyl-tRNA binding site. This chain is Large ribosomal subunit protein bL19, found in Renibacterium salmoninarum (strain ATCC 33209 / DSM 20767 / JCM 11484 / NBRC 15589 / NCIMB 2235).